Here is a 143-residue protein sequence, read N- to C-terminus: Hemoglobin subunit alpha (143 aa).

Position 2 is an N-acetylserine (Ser-2). One can recognise a Globin domain in the interval 2-143 (SLSDKDKAAV…VALALAEKYR (142 aa)). Position 60 (His-60) interacts with O2. Residue His-89 coordinates heme b.

It belongs to the globin family. As to quaternary structure, heterotetramer of two alpha chains and two beta chains. In terms of tissue distribution, red blood cells.

Functionally, involved in oxygen transport from the lung to the various peripheral tissues. This is Hemoglobin subunit alpha (hba) from Artedidraco orianae (Barbeled plunderfish).